A 365-amino-acid chain; its full sequence is MNILKISKQTLRNNIKIIREYIGNAKMCFPVKANAYGHGIEDIVENTHDLVDFFAVANSLEAFRVTAVAKNPVLVFGVIYYEYIEKMISENIRVSIQDYEYIEKLEQIAKELDKKVYAHININTGMNRMGVDYNDACRTIQRAYESDWLILEGVYSHLACADNRDHPTNIKQKNRFDSIVKFTKGLSQDIICHLSNSYGFLGQKGICYDMVRPGILSYGFLPEFYVDRVIREIKPIARLLSKVVKIITLQEGEGVGYSLIYRGFEGEQLAVIPIGYGDGFPRELGDRGFVNINDVMYPMAGRMSMDGLTVSLGINEYDVKVGDTVELISAIPRNRNSAFSIAKQTNTIEYDIMSTLNNRIIRKII.

Residue lysine 32 is the Proton acceptor; specific for D-alanine of the active site. Lysine 32 carries the post-translational modification N6-(pyridoxal phosphate)lysine. Residue arginine 128 participates in substrate binding. Tyrosine 257 serves as the catalytic Proton acceptor; specific for L-alanine. Methionine 305 lines the substrate pocket.

Belongs to the alanine racemase family. It depends on pyridoxal 5'-phosphate as a cofactor.

It carries out the reaction L-alanine = D-alanine. The protein operates within amino-acid biosynthesis; D-alanine biosynthesis; D-alanine from L-alanine: step 1/1. Its function is as follows. Catalyzes the interconversion of L-alanine and D-alanine. May also act on other amino acids. The protein is Alanine racemase (alr) of Francisella tularensis subsp. holarctica (strain FTNF002-00 / FTA).